Consider the following 185-residue polypeptide: MSRLRIYDDTRPESPLLDTQDGAIIAAELQKIGVTFERWQATAPVAPGASQEEVFAAYRADIDRLVAERGFKSVDVASIAPDNPNRAELRRKFLDEHFHKEDEVRFFVAGSGLFTLHVGDKVYEIECVKDDLIAVPDGTTHWFDMGDEPSFVAIRFFTEPDGWVGHFTGTDIAQKFPRYVPTQAS.

H97, H99, E103, and H141 together coordinate Fe(2+). Ni(2+) is bound by residues H97, H99, E103, and H141.

Belongs to the acireductone dioxygenase (ARD) family. Monomer. Fe(2+) serves as cofactor. Ni(2+) is required as a cofactor.

The enzyme catalyses 1,2-dihydroxy-5-(methylsulfanyl)pent-1-en-3-one + O2 = 3-(methylsulfanyl)propanoate + CO + formate + 2 H(+). The catalysed reaction is 1,2-dihydroxy-5-(methylsulfanyl)pent-1-en-3-one + O2 = 4-methylsulfanyl-2-oxobutanoate + formate + 2 H(+). Its pathway is amino-acid biosynthesis; L-methionine biosynthesis via salvage pathway; L-methionine from S-methyl-5-thio-alpha-D-ribose 1-phosphate: step 5/6. Its function is as follows. Catalyzes 2 different reactions between oxygen and the acireductone 1,2-dihydroxy-3-keto-5-methylthiopentene (DHK-MTPene) depending upon the metal bound in the active site. Fe-containing acireductone dioxygenase (Fe-ARD) produces formate and 2-keto-4-methylthiobutyrate (KMTB), the alpha-ketoacid precursor of methionine in the methionine recycle pathway. Ni-containing acireductone dioxygenase (Ni-ARD) produces methylthiopropionate, carbon monoxide and formate, and does not lie on the methionine recycle pathway. The protein is Acireductone dioxygenase of Stenotrophomonas maltophilia (strain R551-3).